Consider the following 455-residue polypeptide: Bifunctional protein GlmU (455 aa).

A pyrophosphorylase region spans residues 1–226; it reads MSLDIVILAA…AMEVQGANDR (226 aa). Residues 8-11, lysine 22, glutamine 73, 78-79, 99-101, glycine 136, glutamate 151, asparagine 166, and asparagine 224 each bind UDP-N-acetyl-alpha-D-glucosamine; these read LAAG, GT, and YGD. Aspartate 101 contributes to the Mg(2+) binding site. Residue asparagine 224 participates in Mg(2+) binding. A linker region spans residues 227–247; the sequence is KQLSELERHYQMREARRLMAA. The segment at 248 to 455 is N-acetyltransferase; that stretch reads GVTLRDPARF…WKRPVKISKD (208 aa). Arginine 330 and lysine 348 together coordinate UDP-N-acetyl-alpha-D-glucosamine. Residue histidine 360 is the Proton acceptor of the active site. Tyrosine 363 and asparagine 374 together coordinate UDP-N-acetyl-alpha-D-glucosamine. Acetyl-CoA-binding positions include alanine 377, 383–384, serine 402, alanine 420, and arginine 437; that span reads NY.

The protein in the N-terminal section; belongs to the N-acetylglucosamine-1-phosphate uridyltransferase family. It in the C-terminal section; belongs to the transferase hexapeptide repeat family. Homotrimer. Mg(2+) is required as a cofactor.

The protein localises to the cytoplasm. The enzyme catalyses alpha-D-glucosamine 1-phosphate + acetyl-CoA = N-acetyl-alpha-D-glucosamine 1-phosphate + CoA + H(+). It carries out the reaction N-acetyl-alpha-D-glucosamine 1-phosphate + UTP + H(+) = UDP-N-acetyl-alpha-D-glucosamine + diphosphate. The protein operates within nucleotide-sugar biosynthesis; UDP-N-acetyl-alpha-D-glucosamine biosynthesis; N-acetyl-alpha-D-glucosamine 1-phosphate from alpha-D-glucosamine 6-phosphate (route II): step 2/2. Its pathway is nucleotide-sugar biosynthesis; UDP-N-acetyl-alpha-D-glucosamine biosynthesis; UDP-N-acetyl-alpha-D-glucosamine from N-acetyl-alpha-D-glucosamine 1-phosphate: step 1/1. It functions in the pathway bacterial outer membrane biogenesis; LPS lipid A biosynthesis. In terms of biological role, catalyzes the last two sequential reactions in the de novo biosynthetic pathway for UDP-N-acetylglucosamine (UDP-GlcNAc). The C-terminal domain catalyzes the transfer of acetyl group from acetyl coenzyme A to glucosamine-1-phosphate (GlcN-1-P) to produce N-acetylglucosamine-1-phosphate (GlcNAc-1-P), which is converted into UDP-GlcNAc by the transfer of uridine 5-monophosphate (from uridine 5-triphosphate), a reaction catalyzed by the N-terminal domain. This chain is Bifunctional protein GlmU, found in Pseudomonas syringae pv. syringae (strain B728a).